The primary structure comprises 228 residues: uncharacterized protein (228 aa).

The 222-residue stretch at 7-228 folds into the ABC transporter domain; it reads VEVHHLKKSV…LVNGQLQEEA (222 aa). Residue 43-50 participates in ATP binding; that stretch reads GESGSGKS.

Belongs to the ABC transporter superfamily.

This is an uncharacterized protein from Escherichia coli O157:H7.